Here is a 223-residue protein sequence, read N- to C-terminus: MTSEVIEDEKQFYSKAKTYWKQIPPTVDGMLGGYGHISNIDLNSSRKFLQRFLREGPNKTGTSCALDCGAGIGRITKRLLLPLFRVVDMVDVTEDFLAKAKTYLGEEGKRVRNYFCCGLQDFSPEPGSYDVIWIQWVIGHLTDQHLAEFLRRCKRGLRPNGIIVIKDNMAQEGVILDDVDSSVCRDLEVVRRIIRTAGLSLLAEERQENLPDEIYHVYSFALR.

Met-1 carries the N-acetylmethionine modification. An N-acetylthreonine; in N-terminal Xaa-Pro-Lys N-methyltransferase 1, N-terminally processed modification is found at Thr-2. S-adenosyl-L-methionine is bound by residues Gly-69, Arg-74, 91–93, 119–120, and Gln-135; these read DVT and LQ.

This sequence belongs to the methyltransferase superfamily. NTM1 family.

The protein resides in the nucleus. It carries out the reaction N-terminal L-alanyl-L-prolyl-L-lysyl-[protein] + 3 S-adenosyl-L-methionine = N-terminal N,N,N-trimethyl-L-alanyl-L-prolyl-L-lysyl-[protein] + 3 S-adenosyl-L-homocysteine + 3 H(+). The enzyme catalyses N-terminal L-seryl-L-prolyl-L-lysyl-[protein] + 3 S-adenosyl-L-methionine = N-terminal N,N,N-trimethyl-L-seryl-L-prolyl-L-lysyl-[protein] + 3 S-adenosyl-L-homocysteine + 3 H(+). It catalyses the reaction N-terminal L-prolyl-L-prolyl-L-lysyl-[protein] + 2 S-adenosyl-L-methionine = N-terminal N,N-dimethyl-L-prolyl-L-prolyl-L-lysyl-[protein] + 2 S-adenosyl-L-homocysteine + 2 H(+). Its function is as follows. Distributive alpha-N-methyltransferase that methylates the N-terminus of target proteins containing the N-terminal motif [Ala/Gly/Pro/Ser]-Pro-Lys when the initiator Met is cleaved. Specifically catalyzes mono-, di- or tri-methylation of the exposed alpha-amino group of the Ala, Gly or Ser residue in the [Ala/Gly/Ser]-Pro-Lys motif and mono- or di-methylation of Pro in the Pro-Pro-Lys motif. Some of the substrates may be primed by NTMT2-mediated monomethylation. Catalyzes the trimethylation of the N-terminal Gly in CENPA (after removal of Met-1). Responsible for the N-terminal methylation of KLHL31, MYL2, MYL3, RB1, RCC1, RPL23A and SET. Required during mitosis for normal bipolar spindle formation and chromosome segregation via its action on RCC1. The polypeptide is N-terminal Xaa-Pro-Lys N-methyltransferase 1 (Ntmt1) (Mus musculus (Mouse)).